Consider the following 117-residue polypeptide: Large ribosomal subunit protein uL18 (117 aa).

It belongs to the universal ribosomal protein uL18 family. Part of the 50S ribosomal subunit; part of the 5S rRNA/L5/L18/L25 subcomplex. Contacts the 5S and 23S rRNAs.

In terms of biological role, this is one of the proteins that bind and probably mediate the attachment of the 5S RNA into the large ribosomal subunit, where it forms part of the central protuberance. The polypeptide is Large ribosomal subunit protein uL18 (Sphingopyxis alaskensis (strain DSM 13593 / LMG 18877 / RB2256) (Sphingomonas alaskensis)).